We begin with the raw amino-acid sequence, 99 residues long: Putative septation protein SpoVG (99 aa).

It belongs to the SpoVG family.

In terms of biological role, could be involved in septation. The protein is Putative septation protein SpoVG of Exiguobacterium sp. (strain ATCC BAA-1283 / AT1b).